Consider the following 354-residue polypeptide: ORC1-type DNA replication protein 9 (354 aa).

ATP contacts are provided by residues 63 to 67 (TGKTC), Tyr-195, and Arg-207.

It belongs to the CDC6/cdc18 family.

Involved in regulation of DNA replication. The chain is ORC1-type DNA replication protein 9 (orc9-1) from Halobacterium salinarum (strain ATCC 700922 / JCM 11081 / NRC-1) (Halobacterium halobium).